Reading from the N-terminus, the 377-residue chain is Alanine racemase (377 aa).

Residue lysine 37 is the Proton acceptor; specific for D-alanine of the active site. The residue at position 37 (lysine 37) is an N6-(pyridoxal phosphate)lysine. Arginine 135 is a substrate binding site. Tyrosine 271 (proton acceptor; specific for L-alanine) is an active-site residue. A substrate-binding site is contributed by methionine 319.

It belongs to the alanine racemase family. It depends on pyridoxal 5'-phosphate as a cofactor.

It carries out the reaction L-alanine = D-alanine. The protein operates within amino-acid biosynthesis; D-alanine biosynthesis; D-alanine from L-alanine: step 1/1. Its function is as follows. Catalyzes the interconversion of L-alanine and D-alanine. May also act on other amino acids. The chain is Alanine racemase (alr) from Helicobacter pylori (strain J99 / ATCC 700824) (Campylobacter pylori J99).